A 95-amino-acid polypeptide reads, in one-letter code: MTTISTDQVAAIARLARLAPDEAQLATFARQFGDILGYMEMLNGLDTTGVEPLYSPVQHATALRSDETAPRCTREDVLRNAPEADSEFFIVPRIV.

It belongs to the GatC family. Heterotrimer of A, B and C subunits.

The catalysed reaction is L-glutamyl-tRNA(Gln) + L-glutamine + ATP + H2O = L-glutaminyl-tRNA(Gln) + L-glutamate + ADP + phosphate + H(+). It catalyses the reaction L-aspartyl-tRNA(Asn) + L-glutamine + ATP + H2O = L-asparaginyl-tRNA(Asn) + L-glutamate + ADP + phosphate + 2 H(+). Functionally, allows the formation of correctly charged Asn-tRNA(Asn) or Gln-tRNA(Gln) through the transamidation of misacylated Asp-tRNA(Asn) or Glu-tRNA(Gln) in organisms which lack either or both of asparaginyl-tRNA or glutaminyl-tRNA synthetases. The reaction takes place in the presence of glutamine and ATP through an activated phospho-Asp-tRNA(Asn) or phospho-Glu-tRNA(Gln). The protein is Aspartyl/glutamyl-tRNA(Asn/Gln) amidotransferase subunit C of Nitratidesulfovibrio vulgaris (strain DSM 19637 / Miyazaki F) (Desulfovibrio vulgaris).